Reading from the N-terminus, the 244-residue chain is ATP synthase subunit a (244 aa).

The next 6 membrane-spanning stretches (helical) occupy residues 17–37 (LTNILMITVASVIVLLIAILT), 75–95 (FLALGVTLLMYIFVSNMLGLP), 112–132 (DPAITLTLAVMVVSLTHYYGV), 164–184 (LTLGLRLYGNIFAGEILLGLL), 196–216 (FFLGLVGTVGAIIPMLAWQAF), and 217–237 (SLFIGTIQAFIFTMLTMVYMS).

The protein belongs to the ATPase A chain family. In terms of assembly, F-type ATPases have 2 components, CF(1) - the catalytic core - and CF(0) - the membrane proton channel. CF(1) has five subunits: alpha(3), beta(3), gamma(1), delta(1), epsilon(1). CF(0) has three main subunits: a(1), b(2) and c(9-12). The alpha and beta chains form an alternating ring which encloses part of the gamma chain. CF(1) is attached to CF(0) by a central stalk formed by the gamma and epsilon chains, while a peripheral stalk is formed by the delta and b chains.

The protein resides in the cell membrane. Key component of the proton channel; it plays a direct role in the translocation of protons across the membrane. This is ATP synthase subunit a from Bacillus velezensis (strain DSM 23117 / BGSC 10A6 / LMG 26770 / FZB42) (Bacillus amyloliquefaciens subsp. plantarum).